The primary structure comprises 446 residues: DDB1- and CUL4-associated factor 12-A (446 aa).

Basic residues predominate over residues 1-12; sequence MTRRSVSRKRRA. The tract at residues 1 to 32 is disordered; that stretch reads MTRRSVSRKRRANPGSGPGEQSDWDHSAHKRK. 4 WD repeats span residues 132 to 173, 177 to 215, 245 to 284, and 333 to 370; these read SHQS…PVCV, GHND…VNKS, PVNC…SKLL, and EQGS…FLED.

It belongs to the WD repeat DCAF12 family. As to quaternary structure, component of the DCX(DCAF12) E3 ubiquitin ligase complex, at least composed of cul4 (cul4a or cul4b), ddb1, dcaf12 and rbx1.

It localises to the cytoplasm. Its subcellular location is the cytoskeleton. The protein resides in the microtubule organizing center. It is found in the centrosome. The protein localises to the nucleus. Its pathway is protein modification; protein ubiquitination. Functionally, substrate-recognition component of a DCX (DDB1-CUL4-X-box) E3 ubiquitin-protein ligase complex of the DesCEND (destruction via C-end degrons) pathway, which recognizes a C-degron located at the extreme C terminus of target proteins, leading to their ubiquitination and degradation. The C-degron recognized by the DesCEND pathway is usually a motif of less than ten residues and can be present in full-length proteins, truncated proteins or proteolytically cleaved forms. The DCX(DCAF12) complex specifically recognizes proteins with a diglutamate (Glu-Glu) at the C-terminus leading to their ubiquitination and degradation. Also directly recognizes the C-terminal glutamate-leucine (Glu-Leu) degron as an alternative degron in proteins leading to their ubiquitination and degradation. This is DDB1- and CUL4-associated factor 12-A (dcaf12-a) from Xenopus laevis (African clawed frog).